The following is a 332-amino-acid chain: Solute carrier family 25 member 16 (332 aa).

Solcar repeat units lie at residues 34–120 (FYWL…YKTL), 128–216 (SGHV…LKSV), and 238–328 (LKTH…MKQF). A run of 6 helical transmembrane segments spans residues 37–57 (LRSF…VAPL), 88–108 (GFLG…PYGA), 134–154 (LMAG…LDMV), 191–211 (GLMP…FTFG), 244–264 (LLCG…FDVT), and 299–319 (GLYR…AVAF).

It belongs to the mitochondrial carrier (TC 2.A.29) family.

Its subcellular location is the mitochondrion inner membrane. May be involved in the transport of coenzyme A in the mitochondrial matrix. Very little is known about the physiological function of this carrier. The polypeptide is Solute carrier family 25 member 16 (Homo sapiens (Human)).